The sequence spans 329 residues: Malate dehydrogenase (329 aa).

Position 12 to 18 (12 to 18 (GAAGQIG)) interacts with NAD(+). Residues R93 and R99 each coordinate substrate. NAD(+)-binding positions include N106, Q113, and 130-132 (VGN). Residues N132 and R163 each coordinate substrate. H188 functions as the Proton acceptor in the catalytic mechanism.

The protein belongs to the LDH/MDH superfamily. MDH type 2 family.

It carries out the reaction (S)-malate + NAD(+) = oxaloacetate + NADH + H(+). Its function is as follows. Catalyzes the reversible oxidation of malate to oxaloacetate. This is Malate dehydrogenase from Frankia alni (strain DSM 45986 / CECT 9034 / ACN14a).